The following is a 459-amino-acid chain: Argininosuccinate lyase (459 aa).

This sequence belongs to the lyase 1 family. Argininosuccinate lyase subfamily.

Its subcellular location is the cytoplasm. It catalyses the reaction 2-(N(omega)-L-arginino)succinate = fumarate + L-arginine. It functions in the pathway amino-acid biosynthesis; L-arginine biosynthesis; L-arginine from L-ornithine and carbamoyl phosphate: step 3/3. The chain is Argininosuccinate lyase from Prochlorococcus marinus (strain MIT 9215).